A 193-amino-acid chain; its full sequence is Erythropoietin (193 aa).

A signal peptide spans 1–27 (MGVHECPAWLWLLLSLLSLPLGLPVLG). 2 disulfide bridges follow: Cys34–Cys188 and Cys56–Cys60. Residue Asn51 is glycosylated (N-linked (GlcNAc...) asparagine). 2 N-linked (GlcNAc...) asparagine glycosylation sites follow: Asn65 and Asn110. Ser153 carries an O-linked (GalNAc...) serine glycan.

The protein belongs to the EPO/TPO family. Produced by kidney or liver of adult mammals and by liver of fetal or neonatal mammals.

It localises to the secreted. Its function is as follows. Hormone involved in the regulation of erythrocyte proliferation and differentiation and the maintenance of a physiological level of circulating erythrocyte mass. Binds to EPOR leading to EPOR dimerization and JAK2 activation thereby activating specific downstream effectors, including STAT1 and STAT3. This Homo sapiens (Human) protein is Erythropoietin (EPO).